We begin with the raw amino-acid sequence, 113 residues long: Putative membrane protein insertion efficiency factor (113 aa).

It belongs to the UPF0161 family.

It is found in the cell inner membrane. Functionally, could be involved in insertion of integral membrane proteins into the membrane. This chain is Putative membrane protein insertion efficiency factor, found in Campylobacter concisus (strain 13826).